Reading from the N-terminus, the 701-residue chain is Polyribonucleotide nucleotidyltransferase (701 aa).

Residues aspartate 485 and aspartate 491 each coordinate Mg(2+). Residues 552–611 enclose the KH domain; sequence PRITTLKINPEKIRDVIGKGGATIRALTEETGTTIELEDDGTVKIASSNGEATKEAIRRI. The S1 motif domain occupies 621 to 689; that stretch reads GTVYNGKVVR…RQGRVRLSMK (69 aa).

It belongs to the polyribonucleotide nucleotidyltransferase family. As to quaternary structure, component of the RNA degradosome, which is a multiprotein complex involved in RNA processing and mRNA degradation. Mg(2+) is required as a cofactor.

It localises to the cytoplasm. The enzyme catalyses RNA(n+1) + phosphate = RNA(n) + a ribonucleoside 5'-diphosphate. Involved in mRNA degradation. Catalyzes the phosphorolysis of single-stranded polyribonucleotides processively in the 3'- to 5'-direction. In Shewanella piezotolerans (strain WP3 / JCM 13877), this protein is Polyribonucleotide nucleotidyltransferase.